Consider the following 113-residue polypeptide: Ribonuclease P protein component (113 aa).

This sequence belongs to the RnpA family. In terms of assembly, consists of a catalytic RNA component (M1 or rnpB) and a protein subunit.

It catalyses the reaction Endonucleolytic cleavage of RNA, removing 5'-extranucleotides from tRNA precursor.. RNaseP catalyzes the removal of the 5'-leader sequence from pre-tRNA to produce the mature 5'-terminus. It can also cleave other RNA substrates such as 4.5S RNA. The protein component plays an auxiliary but essential role in vivo by binding to the 5'-leader sequence and broadening the substrate specificity of the ribozyme. In Finegoldia magna (strain ATCC 29328 / DSM 20472 / WAL 2508) (Peptostreptococcus magnus), this protein is Ribonuclease P protein component.